The following is a 207-amino-acid chain: MSDRLLVLVRHGQSEWNLKNLFTGWKDPDITAQGVDEAKRAGKLLKAEGFVFDAAFVSELTRAKHTLSLILEELGQTSLPVKSDIALNERDYGDLSGLNKDDARKKWGEEQVHIWRRSYDVAPPGGESLKDTLARTLPYYVQEILPGVLRGERTIVTAHGNSLRALIMVLERLSPEAILKRELATGVPIIYRLRADATVESKTDLAG.

Residues 10–17 (RHGQSEWN), 23–24 (TG), Arg-62, 89–92 (ERDY), Lys-100, 116–117 (RR), and 160–161 (GN) each bind substrate. The Tele-phosphohistidine intermediate role is filled by His-11. Glu-89 functions as the Proton donor/acceptor in the catalytic mechanism.

It belongs to the phosphoglycerate mutase family. BPG-dependent PGAM subfamily. In terms of assembly, homodimer.

The catalysed reaction is (2R)-2-phosphoglycerate = (2R)-3-phosphoglycerate. It participates in carbohydrate degradation; glycolysis; pyruvate from D-glyceraldehyde 3-phosphate: step 3/5. In terms of biological role, catalyzes the interconversion of 2-phosphoglycerate and 3-phosphoglycerate. This is 2,3-bisphosphoglycerate-dependent phosphoglycerate mutase from Afipia carboxidovorans (strain ATCC 49405 / DSM 1227 / KCTC 32145 / OM5) (Oligotropha carboxidovorans).